A 227-amino-acid polypeptide reads, in one-letter code: Orotidine 5'-phosphate decarboxylase (227 aa).

Substrate is bound by residues D8, K30, 57–66 (DLKFHDIPNT), T116, R177, Q186, G206, and R207. K59 (proton donor) is an active-site residue.

It belongs to the OMP decarboxylase family. Type 1 subfamily. Homodimer.

It catalyses the reaction orotidine 5'-phosphate + H(+) = UMP + CO2. The protein operates within pyrimidine metabolism; UMP biosynthesis via de novo pathway; UMP from orotate: step 2/2. In terms of biological role, catalyzes the decarboxylation of orotidine 5'-monophosphate (OMP) to uridine 5'-monophosphate (UMP). This chain is Orotidine 5'-phosphate decarboxylase, found in Acinetobacter baylyi (strain ATCC 33305 / BD413 / ADP1).